Here is a 356-residue protein sequence, read N- to C-terminus: sn-glycerol-3-phosphate import ATP-binding protein UgpC (356 aa).

The ABC transporter domain occupies leucine 4 to isoleucine 235. Glycine 37–serine 44 is a binding site for ATP.

It belongs to the ABC transporter superfamily. sn-glycerol-3-phosphate importer (TC 3.A.1.1.3) family. As to quaternary structure, the complex is composed of two ATP-binding proteins (UgpC), two transmembrane proteins (UgpA and UgpE) and a solute-binding protein (UgpB).

It localises to the cell inner membrane. The enzyme catalyses sn-glycerol 3-phosphate(out) + ATP + H2O = sn-glycerol 3-phosphate(in) + ADP + phosphate + H(+). Functionally, part of the ABC transporter complex UgpBAEC involved in sn-glycerol-3-phosphate (G3P) import. Responsible for energy coupling to the transport system. This Escherichia coli O6:H1 (strain CFT073 / ATCC 700928 / UPEC) protein is sn-glycerol-3-phosphate import ATP-binding protein UgpC.